We begin with the raw amino-acid sequence, 232 residues long: Chromosome partition protein MukE (232 aa).

The tract at residues 203 to 232 is disordered; the sequence is HTKEPSQGSLLSEEDQEEQAQEEMTEEGEA. Residues 214 to 232 show a composition bias toward acidic residues; that stretch reads SEEDQEEQAQEEMTEEGEA.

It belongs to the MukE family. Interacts, and probably forms a ternary complex, with MukF and MukB. The complex formation is stimulated by calcium or magnesium.

It localises to the cytoplasm. It is found in the nucleoid. Involved in chromosome condensation, segregation and cell cycle progression. May participate in facilitating chromosome segregation by condensation DNA from both sides of a centrally located replisome during cell division. Probably acts via its interaction with MukB and MukF. This is Chromosome partition protein MukE from Vibrio parahaemolyticus serotype O3:K6 (strain RIMD 2210633).